Consider the following 220-residue polypeptide: Probable septum site-determining protein MinC (220 aa).

This sequence belongs to the MinC family. In terms of assembly, interacts with MinD and FtsZ.

Functionally, cell division inhibitor that blocks the formation of polar Z ring septums. Rapidly oscillates between the poles of the cell to destabilize FtsZ filaments that have formed before they mature into polar Z rings. Prevents FtsZ polymerization. The protein is Probable septum site-determining protein MinC of Vibrio atlanticus (strain LGP32) (Vibrio splendidus (strain Mel32)).